Consider the following 201-residue polypeptide: Peptidyl-tRNA hydrolase (201 aa).

Position 14 (Tyr14) interacts with tRNA. The active-site Proton acceptor is the His19. 3 residues coordinate tRNA: Tyr64, Asn66, and Asn112.

This sequence belongs to the PTH family. Monomer.

It is found in the cytoplasm. The enzyme catalyses an N-acyl-L-alpha-aminoacyl-tRNA + H2O = an N-acyl-L-amino acid + a tRNA + H(+). In terms of biological role, hydrolyzes ribosome-free peptidyl-tRNAs (with 1 or more amino acids incorporated), which drop off the ribosome during protein synthesis, or as a result of ribosome stalling. Functionally, catalyzes the release of premature peptidyl moieties from peptidyl-tRNA molecules trapped in stalled 50S ribosomal subunits, and thus maintains levels of free tRNAs and 50S ribosomes. This is Peptidyl-tRNA hydrolase from Bradyrhizobium sp. (strain ORS 278).